Consider the following 368-residue polypeptide: Chaperone protein DnaJ (368 aa).

Positions 5–69 (DYYEVLGVAR…NQRARYDQFG (65 aa)) constitute a J domain. The CR-type zinc-finger motif lies at 125-207 (GVEKVITIPV…CRGAGRVRKN (83 aa)). The Zn(2+) site is built by Cys-138, Cys-141, Cys-155, Cys-158, Cys-181, Cys-184, Cys-195, and Cys-198. CXXCXGXG motif repeat units follow at residues 138–145 (CGTCHGSG), 155–162 (CKRCGGSG), 181–188 (CSTCHGRG), and 195–202 (CETCRGAG).

The protein belongs to the DnaJ family. Homodimer. The cofactor is Zn(2+).

The protein resides in the cytoplasm. Functionally, participates actively in the response to hyperosmotic and heat shock by preventing the aggregation of stress-denatured proteins and by disaggregating proteins, also in an autonomous, DnaK-independent fashion. Unfolded proteins bind initially to DnaJ; upon interaction with the DnaJ-bound protein, DnaK hydrolyzes its bound ATP, resulting in the formation of a stable complex. GrpE releases ADP from DnaK; ATP binding to DnaK triggers the release of the substrate protein, thus completing the reaction cycle. Several rounds of ATP-dependent interactions between DnaJ, DnaK and GrpE are required for fully efficient folding. Also involved, together with DnaK and GrpE, in the DNA replication of plasmids through activation of initiation proteins. The polypeptide is Chaperone protein DnaJ (Exiguobacterium sibiricum (strain DSM 17290 / CCUG 55495 / CIP 109462 / JCM 13490 / 255-15)).